The chain runs to 311 residues: Urease accessory protein UreD 2 (311 aa).

The protein belongs to the UreD family. As to quaternary structure, ureD, UreF and UreG form a complex that acts as a GTP-hydrolysis-dependent molecular chaperone, activating the urease apoprotein by helping to assemble the nickel containing metallocenter of UreC. The UreE protein probably delivers the nickel.

It is found in the cytoplasm. Its function is as follows. Required for maturation of urease via the functional incorporation of the urease nickel metallocenter. This is Urease accessory protein UreD 2 from Methylorubrum extorquens (strain PA1) (Methylobacterium extorquens).